The following is an 88-amino-acid chain: Apolipoprotein C-I (88 aa).

Residues 1-26 form the signal peptide; the sequence is MRLFLSLPVWVAVLAMVLEGPAPAQA.

Belongs to the apolipoprotein C1 family.

Its subcellular location is the secreted. Its function is as follows. Inhibitor of lipoprotein binding to the low density lipoprotein (LDL) receptor, LDL receptor-related protein, and very low density lipoprotein (VLDL) receptor. Associates with high density lipoproteins (HDL) and the triacylglycerol-rich lipoproteins in the plasma and makes up about 10% of the protein of the VLDL and 2% of that of HDL. Appears to interfere directly with fatty acid uptake and is also the major plasma inhibitor of cholesteryl ester transfer protein (CETP). Binds free fatty acids and reduces their intracellular esterification. Modulates the interaction of APOE with beta-migrating VLDL and inhibits binding of beta-VLDL to the LDL receptor-related protein. The sequence is that of Apolipoprotein C-I (APOC1) from Ursus maritimus (Polar bear).